Consider the following 448-residue polypeptide: Probable glycine dehydrogenase (decarboxylating) subunit 1 (448 aa).

It belongs to the GcvP family. N-terminal subunit subfamily. The glycine cleavage system is composed of four proteins: P, T, L and H. In this organism, the P 'protein' is a heterodimer of two subunits.

It catalyses the reaction N(6)-[(R)-lipoyl]-L-lysyl-[glycine-cleavage complex H protein] + glycine + H(+) = N(6)-[(R)-S(8)-aminomethyldihydrolipoyl]-L-lysyl-[glycine-cleavage complex H protein] + CO2. In terms of biological role, the glycine cleavage system catalyzes the degradation of glycine. The P protein binds the alpha-amino group of glycine through its pyridoxal phosphate cofactor; CO(2) is released and the remaining methylamine moiety is then transferred to the lipoamide cofactor of the H protein. The polypeptide is Probable glycine dehydrogenase (decarboxylating) subunit 1 (Listeria innocua serovar 6a (strain ATCC BAA-680 / CLIP 11262)).